The following is a 452-amino-acid chain: Cytochrome b-c1 complex subunit 2, mitochondrial (452 aa).

A mitochondrion-targeting transit peptide spans 1–14 (MKLLSRAGSFSRFY). 3 positions are modified to N6-acetyllysine: Lys65, Lys198, and Lys249. Ser367 is subject to Phosphoserine.

It belongs to the peptidase M16 family. UQCRC2/QCR2 subfamily. Component of the ubiquinol-cytochrome c oxidoreductase (cytochrome b-c1 complex, complex III, CIII), a multisubunit enzyme composed of 11 subunits. The complex is composed of 3 respiratory subunits cytochrome b, cytochrome c1 and Rieske protein UQCRFS1, 2 core protein subunits UQCRC1/QCR1 and UQCRC2/QCR2, and 6 low-molecular weight protein subunits UQCRH/QCR6, UQCRB/QCR7, UQCRQ/QCR8, UQCR10/QCR9, UQCR11/QCR10 and subunit 9, the cleavage product of Rieske protein UQCRFS1. The complex exists as an obligatory dimer and forms supercomplexes (SCs) in the inner mitochondrial membrane with NADH-ubiquinone oxidoreductase (complex I, CI) and cytochrome c oxidase (complex IV, CIV), resulting in different assemblies (supercomplex SCI(1)III(2)IV(1) and megacomplex MCI(2)III(2)IV(2)). Interacts with RAB5IF. Interacts with STMP1. In terms of tissue distribution, expressed in the head region and flagellum of epididymal sperm.

The protein resides in the mitochondrion inner membrane. In terms of biological role, component of the ubiquinol-cytochrome c oxidoreductase, a multisubunit transmembrane complex that is part of the mitochondrial electron transport chain which drives oxidative phosphorylation. The respiratory chain contains 3 multisubunit complexes succinate dehydrogenase (complex II, CII), ubiquinol-cytochrome c oxidoreductase (cytochrome b-c1 complex, complex III, CIII) and cytochrome c oxidase (complex IV, CIV), that cooperate to transfer electrons derived from NADH and succinate to molecular oxygen, creating an electrochemical gradient over the inner membrane that drives transmembrane transport and the ATP synthase. The cytochrome b-c1 complex catalyzes electron transfer from ubiquinol to cytochrome c, linking this redox reaction to translocation of protons across the mitochondrial inner membrane, with protons being carried across the membrane as hydrogens on the quinol. In the process called Q cycle, 2 protons are consumed from the matrix, 4 protons are released into the intermembrane space and 2 electrons are passed to cytochrome c. The 2 core subunits UQCRC1/QCR1 and UQCRC2/QCR2 are homologous to the 2 mitochondrial-processing peptidase (MPP) subunits beta-MPP and alpha-MPP respectively, and they seem to have preserved their MPP processing properties. May be involved in the in situ processing of UQCRFS1 into the mature Rieske protein and its mitochondrial targeting sequence (MTS)/subunit 9 when incorporated into complex III. In Rattus norvegicus (Rat), this protein is Cytochrome b-c1 complex subunit 2, mitochondrial (Uqcrc2).